The sequence spans 876 residues: MSSITSETGKRRVKRTYEVTRQNDNAVRIEPSSLGEEEDKEAKDKNSALQLKRSRYDPNKVFSNTNQGPEKNNLKGEQLGSQKKSSKYDEKITSNNELTTKKGLLGDSENETKYASSNSKFNVEVTHKIKNAKEIDKINRQRMWEEQQLRNAMAGQSDHPDDITLEGSDKYDYVFDTDAMIDYTNEEDDLLPEEKLQYEARLAQALETEEKRILTIQEARKLLPVHQYKDELLQEIKKNQVLIIMGETGSGKTTQLPQYLVEDGFTDQGKLQIAITQPRRVAATSVAARVADEMNVVLGKEVGYQIRFEDKTTPNKTVLKYMTDGMLLREFLTDSKLSKYSCIMIDEAHERTLATDILIGLLKDILPQRPTLKLLISSATMNAKKFSEFFDNCPIFNVPGRRYPVDIHYTLQPEANYIHAAITTIFQIHTTQSLPGDILVFLTGQEEIERTKTKLEEIMSKLGSRTKQMIITPIYANLPQEQQLKIFQPTPENCRKVVLATNIAETSLTIDGIRYVIDPGFVKENSYVPSTGMTQLLTVPCSRASVDQRAGRAGRVGPGKCFRIFTKWSYLHELELMPKPEITRTNLSNTVLLLLSLGVTDLIKFPLMDKPSIPTLRKSLENLYILGALNSKGTITRLGKMMCEFPCEPEFAKVLYTAATHEQCQGVLEECLTIVSMLHETPSLFIGQKRDAAASVLSEVESDHILYLEIFNQWRNSKFSRSWCQDHKIQFKTMLRVRNIRNQLFRCSEKVGLVEKNDQARMKIGNIAGYINARITRCFISGFPMNIVQLGPTGYQTMGRSSGGLNVSVHPTSILFVNHKEKAQRPSKYVLYQQLMLTSKEFIRDCLVIPKEEWLIDMVPQIFKDLIDDKTNRGRR.

The segment at 1–111 (MSSITSETGK…KGLLGDSENE (111 aa)) is disordered. At Ser2 the chain carries N-acetylserine. Polar residues predominate over residues 61–70 (VFSNTNQGPE). Positions 233–399 (LQEIKKNQVL…FDNCPIFNVP (167 aa)) constitute a Helicase ATP-binding domain. 246–253 (GETGSGKT) contributes to the ATP binding site. The short motif at 346-349 (DEAH) is the DEAH box element. In terms of domain architecture, Helicase C-terminal spans 424-598 (TIFQIHTTQS…NTVLLLLSLG (175 aa)).

This sequence belongs to the DEAD box helicase family. DEAH subfamily. In terms of assembly, interacts directly with pre-mRNA. According to PubMed:2251118, associated with spliceosomes prior to and throughout step 1 of the splicing reaction. According to PubMed:8943336, it leaves the spliceosome before reaction 1. Interacts with SPP2.

The protein localises to the nucleus. It carries out the reaction ATP + H2O = ADP + phosphate + H(+). Functionally, involved in pre-mRNA splicing. Is required together with ATP and at least one other factor, for the first cleavage-ligation reaction. Functions as a molecular motor in the activation of the precatalytic spliceosome for the first transesterification reaction of pre-mRNA splicing by hydrolyzing ATP to cause the activation of the spliceosome without the occurrence of splicing. Capable of hydrolyzing nucleoside triphosphates in the presence of single-stranded RNAs such as poly(U). This chain is Pre-mRNA-splicing factor ATP-dependent RNA helicase-like protein PRP2 (PRP2), found in Saccharomyces cerevisiae (strain ATCC 204508 / S288c) (Baker's yeast).